Consider the following 677-residue polypeptide: DNA ligase (677 aa).

Residues 32–36, 81–82, and Glu-112 contribute to the NAD(+) site; these read DSEYD and SL. Lys-114 (N6-AMP-lysine intermediate) is an active-site residue. The NAD(+) site is built by Arg-135, Glu-171, Lys-288, and Lys-312. Zn(2+)-binding residues include Cys-416, Cys-419, Cys-434, and Cys-439. The 80-residue stretch at 598-677 folds into the BRCT domain; it reads YKPLPLSGVE…QEFINMLEQS (80 aa).

Belongs to the NAD-dependent DNA ligase family. LigA subfamily. Requires Mg(2+) as cofactor. The cofactor is Mn(2+).

The enzyme catalyses NAD(+) + (deoxyribonucleotide)n-3'-hydroxyl + 5'-phospho-(deoxyribonucleotide)m = (deoxyribonucleotide)n+m + AMP + beta-nicotinamide D-nucleotide.. Its function is as follows. DNA ligase that catalyzes the formation of phosphodiester linkages between 5'-phosphoryl and 3'-hydroxyl groups in double-stranded DNA using NAD as a coenzyme and as the energy source for the reaction. It is essential for DNA replication and repair of damaged DNA. This chain is DNA ligase, found in Dehalococcoides mccartyi (strain ATCC BAA-2266 / KCTC 15142 / 195) (Dehalococcoides ethenogenes (strain 195)).